The chain runs to 403 residues: Ribosomal RNA large subunit methyltransferase I (403 aa).

In terms of domain architecture, PUA spans 9–88; it reads YPRLVLSKGR…ESIDIAFFTR (80 aa).

The protein belongs to the methyltransferase superfamily. RlmI family.

The protein localises to the cytoplasm. It catalyses the reaction cytidine(1962) in 23S rRNA + S-adenosyl-L-methionine = 5-methylcytidine(1962) in 23S rRNA + S-adenosyl-L-homocysteine + H(+). In terms of biological role, specifically methylates the cytosine at position 1962 (m5C1962) of 23S rRNA. This is Ribosomal RNA large subunit methyltransferase I from Salmonella schwarzengrund (strain CVM19633).